Here is a 1392-residue protein sequence, read N- to C-terminus: DNA-directed RNA polymerase subunit beta (1392 aa).

This sequence belongs to the RNA polymerase beta chain family. The RNAP catalytic core consists of 2 alpha, 1 beta, 1 beta' and 1 omega subunit. When a sigma factor is associated with the core the holoenzyme is formed, which can initiate transcription.

It carries out the reaction RNA(n) + a ribonucleoside 5'-triphosphate = RNA(n+1) + diphosphate. In terms of biological role, DNA-dependent RNA polymerase catalyzes the transcription of DNA into RNA using the four ribonucleoside triphosphates as substrates. In Neisseria gonorrhoeae (strain NCCP11945), this protein is DNA-directed RNA polymerase subunit beta.